Consider the following 353-residue polypeptide: 3'-5' exonuclease (353 aa).

Residues 1–119 (MEKYLTKMPI…PSPEKEKPEK (119 aa)) are disordered. Basic and acidic residues-rich tracts occupy residues 13-30 (KANEVPKEEAGVKKETPK) and 37-50 (KKDTPKELKDKENA). Positions 59 to 70 (TKGRPGRPAAKR) are enriched in basic residues. The segment covering 71–90 (KNLDTPDVTEKLAMEEENPP) has biased composition (basic and acidic residues). Ser-103, Ser-109, and Ser-111 each carry phosphoserine. The 3'-5' exonuclease domain occupies 145–313 (VLQWVEKQKD…GQVIYRELER (169 aa)). Mg(2+)-binding residues include Asp-162, Glu-164, and Asp-300.

Belongs to the WRNexo family.

It localises to the nucleus. Its function is as follows. Has exonuclease activity on both single-stranded and duplex templates bearing overhangs, but not blunt ended duplex DNA, and cleaves in a 3'-5' direction. Essential for the formation of DNA replication focal centers. Has an important role in maintaining genome stability. The protein is 3'-5' exonuclease of Drosophila melanogaster (Fruit fly).